We begin with the raw amino-acid sequence, 380 residues long: MDWIQTAGAGTQLPENNIKIAVFGIGGAGNNIIDDMLRMHPELQTANVQFFALNTDLQHLKTKRYVQNKAVIQFEESKGLGVGGDPQKGAVLAHHFLEQFHKLSDSFDFCILVAGFGKGTGTGATPVFSKFLSNKGVLNLSIVSYPAMCEGLKAREKAAKGLERLNQATDSFMLFRNDRCTDGIYQLANVAIVKTIKNIIELINLPLQQNIDFEDIRSFFKKPAQRLENEANLFRVTNTFTFSFDAHNTIEHFSHKLKNFEYEGFFDHKVEGAQKVILKVLVNQGLYPLDLTQIQEIIWAKIDNHNLEVQLGVDFTDANPSVQLFFLMEKKQAVSSDFIQKPAFISVKEVNQKPAKPFQVLNDLKELGLKYVKQQTGFNY.

GTP contacts are provided by residues 27 to 31 (GAGNN), 119 to 121 (GTG), Glu150, and Asn189.

It belongs to the FtsZ family. As to quaternary structure, homodimer. Polymerizes to form a dynamic ring structure in a strictly GTP-dependent manner. Interacts directly with several other division proteins.

It localises to the cytoplasm. Its function is as follows. Essential cell division protein that forms a contractile ring structure (Z ring) at the future cell division site. The regulation of the ring assembly controls the timing and the location of cell division. One of the functions of the FtsZ ring is to recruit other cell division proteins to the septum to produce a new cell wall between the dividing cells. Binds GTP and shows GTPase activity. This Mycoplasma pneumoniae (strain ATCC 29342 / M129 / Subtype 1) (Mycoplasmoides pneumoniae) protein is Cell division protein FtsZ.